Consider the following 304-residue polypeptide: Nod factor export ATP-binding protein I (304 aa).

The ABC transporter domain occupies 6–236 (IDFRNVEKRF…EIGCDVIEIY (231 aa)). 38–45 (GPNGAGKT) contributes to the ATP binding site.

Belongs to the ABC transporter superfamily. Lipooligosaccharide exporter (TC 3.A.1.102) family. The complex is composed of two ATP-binding proteins (NodI) and two transmembrane proteins (NodJ).

Its subcellular location is the cell inner membrane. In terms of biological role, part of the ABC transporter complex NodIJ involved in the export of the nodulation factors (Nod factors), the bacterial signal molecules that induce symbiosis and subsequent nodulation induction. Nod factors are LCO (lipo-chitin oligosaccharide), a modified beta-1,4-linked N-acetylglucosamine oligosaccharide. This subunit is responsible for energy coupling to the transport system. The polypeptide is Nod factor export ATP-binding protein I (Burkholderia lata (strain ATCC 17760 / DSM 23089 / LMG 22485 / NCIMB 9086 / R18194 / 383)).